The following is a 293-amino-acid chain: Homoserine kinase (293 aa).

An ATP-binding site is contributed by 83-93 (PITRGMGSSSA).

It belongs to the GHMP kinase family. Homoserine kinase subfamily.

It is found in the cytoplasm. It catalyses the reaction L-homoserine + ATP = O-phospho-L-homoserine + ADP + H(+). The protein operates within amino-acid biosynthesis; L-threonine biosynthesis; L-threonine from L-aspartate: step 4/5. Catalyzes the ATP-dependent phosphorylation of L-homoserine to L-homoserine phosphate. This is Homoserine kinase from Helicobacter pylori (strain ATCC 700392 / 26695) (Campylobacter pylori).